We begin with the raw amino-acid sequence, 308 residues long: MQEKISKFEDFLTQLQQNITTALEQHETNAAKFISDKWQKPDTPDQKLKGYGNSMIIEGGEIFEKGVVAFSRVHGSELPPSATAKRQELAGKSFIATGLSLVIHPRNPFVPTSHANFRIFIAGADTDTPIWWFGGGFDLTPYYPFEEDAIHWHQTAKNICDKHDKTYYSKFKKWCDEYFYLKHRDECRGVGGLFFDDLNDKSFDECFNFVTDCANSYLDAYIPIVAQRKNIEYSQKHKDFQLYRRGRYVEFNLVFDRGTIFGLQSGGRTESILSSMPPMASWRYNWQPEQNSEEAKVYQYIKPRDWIK.

A substrate-binding site is contributed by Ser-100. Residues His-104 and His-114 each contribute to the a divalent metal cation site. His-114 (proton donor) is an active-site residue. 116-118 (NFR) is a binding site for substrate. Residues His-153 and His-183 each coordinate a divalent metal cation. Residues 248–283 (YVEFNLVFDRGTIFGLQSGGRTESILSSMPPMASWR) form an important for dimerization region. 266 to 268 (GGR) is a substrate binding site.

The protein belongs to the aerobic coproporphyrinogen-III oxidase family. In terms of assembly, homodimer. A divalent metal cation serves as cofactor.

It localises to the cytoplasm. The enzyme catalyses coproporphyrinogen III + O2 + 2 H(+) = protoporphyrinogen IX + 2 CO2 + 2 H2O. It participates in porphyrin-containing compound metabolism; protoporphyrin-IX biosynthesis; protoporphyrinogen-IX from coproporphyrinogen-III (O2 route): step 1/1. Functionally, involved in the heme biosynthesis. Catalyzes the aerobic oxidative decarboxylation of propionate groups of rings A and B of coproporphyrinogen-III to yield the vinyl groups in protoporphyrinogen-IX. This Francisella tularensis subsp. novicida (strain U112) protein is Oxygen-dependent coproporphyrinogen-III oxidase.